The sequence spans 342 residues: MATH domain and coiled-coil domain-containing protein At3g44800 (342 aa).

Residues 3-129 (YEKFTWVIKN…NNEVKIVAEV (127 aa)) form the MATH domain. A coiled-coil region spans residues 253–327 (KVDWLERKLE…ALLEKEKGKV (75 aa)).

This Arabidopsis thaliana (Mouse-ear cress) protein is MATH domain and coiled-coil domain-containing protein At3g44800.